Reading from the N-terminus, the 382-residue chain is Carbamoyl phosphate synthase small chain (382 aa).

The segment at 1 to 187 (MPTPALLVLA…EFRPQTATEE (187 aa)) is CPSase. L-glutamine contacts are provided by S47, G239, and G241. Residues 191–377 (TVVAIDFGVK…VAQMRAYRQQ (187 aa)) enclose the Glutamine amidotransferase type-1 domain. C267 (nucleophile) is an active-site residue. L-glutamine-binding residues include L268, Q271, N307, G309, and F310. Residues H350 and E352 contribute to the active site.

Belongs to the CarA family. As to quaternary structure, composed of two chains; the small (or glutamine) chain promotes the hydrolysis of glutamine to ammonia, which is used by the large (or ammonia) chain to synthesize carbamoyl phosphate. Tetramer of heterodimers (alpha,beta)4.

The catalysed reaction is hydrogencarbonate + L-glutamine + 2 ATP + H2O = carbamoyl phosphate + L-glutamate + 2 ADP + phosphate + 2 H(+). It carries out the reaction L-glutamine + H2O = L-glutamate + NH4(+). The protein operates within amino-acid biosynthesis; L-arginine biosynthesis; carbamoyl phosphate from bicarbonate: step 1/1. Its pathway is pyrimidine metabolism; UMP biosynthesis via de novo pathway; (S)-dihydroorotate from bicarbonate: step 1/3. Functionally, small subunit of the glutamine-dependent carbamoyl phosphate synthetase (CPSase). CPSase catalyzes the formation of carbamoyl phosphate from the ammonia moiety of glutamine, carbonate, and phosphate donated by ATP, constituting the first step of 2 biosynthetic pathways, one leading to arginine and/or urea and the other to pyrimidine nucleotides. The small subunit (glutamine amidotransferase) binds and cleaves glutamine to supply the large subunit with the substrate ammonia. The chain is Carbamoyl phosphate synthase small chain from Thermosynechococcus vestitus (strain NIES-2133 / IAM M-273 / BP-1).